A 278-amino-acid polypeptide reads, in one-letter code: Pantothenate synthetase (278 aa).

ATP is bound at residue 27–34 (MGYLHEGH). Catalysis depends on histidine 34, which acts as the Proton donor. Glutamine 58 contacts (R)-pantoate. Beta-alanine is bound at residue glutamine 58. 144 to 147 (GQKD) lines the ATP pocket. Glutamine 150 contacts (R)-pantoate. ATP contacts are provided by residues valine 173 and 181 to 184 (MSSR).

The protein belongs to the pantothenate synthetase family. As to quaternary structure, homodimer.

The protein localises to the cytoplasm. The enzyme catalyses (R)-pantoate + beta-alanine + ATP = (R)-pantothenate + AMP + diphosphate + H(+). It functions in the pathway cofactor biosynthesis; (R)-pantothenate biosynthesis; (R)-pantothenate from (R)-pantoate and beta-alanine: step 1/1. In terms of biological role, catalyzes the condensation of pantoate with beta-alanine in an ATP-dependent reaction via a pantoyl-adenylate intermediate. The sequence is that of Pantothenate synthetase from Roseiflexus castenholzii (strain DSM 13941 / HLO8).